The sequence spans 423 residues: Keratin, type I cytoskeletal 18 (423 aa).

Residue Ser2 is modified to N-acetylserine. The tract at residues 2 to 71 (SFTTRSTTFS…GLAGMGGIQT (70 aa)) is head. Phosphoserine occurs at positions 7, 11, 16, and 19. Phosphoserine; alternate is present on residues Ser31 and Ser32. Ser31 and Ser32 each carry an O-linked (GlcNAc) serine; alternate glycan. Ser35 is modified (phosphoserine). Tyr37 bears the Phosphotyrosine mark. Residue Ser43 is modified to Phosphoserine. Position 46 is an omega-N-methylarginine (Arg46). A Phosphoserine; alternate modification is found at Ser50. O-linked (GlcNAc) serine; alternate glycosylation is present at Ser50. At Ser52 the chain carries Phosphoserine; by MAPKAPK2 and MAPKAPK3. Phosphoserine occurs at positions 57 and 60. A necessary for interaction with PNN region spans residues 62-366 (GLAGMGGIQT…EALLNIKVKL (305 aa)). The segment at 69 to 121 (IQTEKETMQDLNDRLASYLDKVKSLETENRRLESKIREHLEKKGPQGVRDWGH) is interaction with TRADD. Residues 72–107 (EKETMQDLNDRLASYLDKVKSLETENRRLESKIREH) are coil 1A. One can recognise an IF rod domain in the interval 72–384 (EKETMQDLND…RLLEDGEDFS (313 aa)). A Glycyl lysine isopeptide (Lys-Gly) (interchain with G-Cter in SUMO2) cross-link involves residue Lys73. Phosphoserine is present on residues Ser85 and Ser92. The tract at residues 108-125 (LEKKGPQGVRDWGHYFKI) is linker 1. The residue at position 124 (Lys124) is an N6-acetyllysine. A coil 1B region spans residues 126–217 (IEDLRAQIFA…KNHEEEVQGL (92 aa)). Residues Ser137 and Ser170 each carry the phosphoserine modification. The tract at residues 218–241 (EAQIASSGLTVEVDAPKSQDLSKI) is linker 12. The tract at residues 236–384 (QDLSKIMADI…RLLEDGEDFS (149 aa)) is interaction with DNAJB6. Residue Lys240 forms a Glycyl lysine isopeptide (Lys-Gly) (interchain with G-Cter in SUMO2) linkage. Residues 242-380 (MADIRAQYEA…ATYRRLLEDG (139 aa)) form a coil 2 region. Thr295 bears the Phosphothreonine mark. Ser316 carries the phosphoserine modification. Residues Lys363 and Lys365 each participate in a glycyl lysine isopeptide (Lys-Gly) (interchain with G-Cter in SUMO2) cross-link. The tail stretch occupies residues 381-423 (EDFSLNDALDSSNSMQTVQKTTTRKIVDGRVVSETNDTRVLRH). Phosphoserine occurs at positions 384, 391, 392, and 394. At Thr397 the chain carries Phosphothreonine.

Belongs to the intermediate filament family. As to quaternary structure, heterotetramer of two type I and two type II keratins. KRT18 associates with KRT8. Interacts with PLEC isoform 1C, when in a heterodimer with KRT8. Interacts with PNN and mutated CFTR. Interacts with YWHAE, YWHAH and YWHAZ only when phosphorylated. Interacts with the thrombin-antithrombin complex. Interacts with DNAJB6, TCHP and TRADD. Interacts with FAM83H. Interacts with EPPK1. Interacts with PKP1 and PKP2. In terms of processing, phosphorylation increases by IL-6. Post-translationally, proteolytically cleaved by caspases during epithelial cell apoptosis. Cleavage occurs at Asp-231 by either caspase-3, caspas-6 or caspase-7. O-GlcNAcylation increases solubility, and decreases stability by inducing proteasomal degradation. In terms of tissue distribution, expressed in endoderm, intestinal epithelial cells and in most extraembryonic tissues.

It is found in the nucleus matrix. It localises to the cytoplasm. The protein resides in the perinuclear region. Its subcellular location is the nucleus. The protein localises to the nucleolus. When phosphorylated, plays a role in filament reorganization. Involved in the delivery of mutated CFTR to the plasma membrane. Involved in the uptake of thrombin-antithrombin complexes by hepatic cells. Together with KRT8, is involved in interleukin-6 (IL-6)-mediated barrier protection. This is Keratin, type I cytoskeletal 18 (Krt18) from Mus musculus (Mouse).